Here is a 616-residue protein sequence, read N- to C-terminus: Glucoamylase P (616 aa).

The N-terminal stretch at 1–29 is a signal peptide; sequence MRLLPSSCAGALSLLCSLAIAAPTELKAR. Trp-149 lines the substrate pocket. An N-linked (GlcNAc...) asparagine glycan is attached at Asn-200. Asp-205 acts as the Proton acceptor in catalysis. Glu-208 serves as the catalytic Proton donor. N-linked (GlcNAc...) asparagine glycosylation occurs at Asn-427. The CBM20 domain occupies 501-608; sequence VTSSCQVSIT…AVTTDDAWMG (108 aa).

The protein belongs to the glycosyl hydrolase 15 family.

It localises to the secreted. It carries out the reaction Hydrolysis of terminal (1-&gt;4)-linked alpha-D-glucose residues successively from non-reducing ends of the chains with release of beta-D-glucose.. The protein is Glucoamylase P (GAMP) of Amorphotheca resinae (Creosote fungus).